Reading from the N-terminus, the 297-residue chain is MFSRLTGVSLRQGLTVQKRLFSYARPLFNSSGSERTGSGSRQYNDGARAGAEYGYTGTRIVPKLSTFYSANPHHEAHIDNLEALLRKYIKYPTVQVEERPSWLSLQEYALIGGGSRLKSTQYKQLLFMLNRLNSIDPQLVTDEISNTLAKYHKKTKLQPQRDTLKQLDEFGRSLAIGRRKTSTAKVYVVRGEGKILVNDRQLNDYFVKMKDRESVMYPLKAIDSVGKYNVFAMVSGGGITGQADALMHAIGKALVAFNPLLKTRLHRSGVLTRDYRHVERKKPGKRKARKMPTWVKR.

The interval 278–297 (VERKKPGKRKARKMPTWVKR) is disordered.

Belongs to the universal ribosomal protein uS9 family.

It is found in the mitochondrion. The polypeptide is Small ribosomal subunit protein uS9m (MRPS9) (Kluyveromyces lactis (strain ATCC 8585 / CBS 2359 / DSM 70799 / NBRC 1267 / NRRL Y-1140 / WM37) (Yeast)).